Here is a 250-residue protein sequence, read N- to C-terminus: uncharacterized protein (250 aa).

Residues serine 15, leucine 17, aspartate 36, aspartate 56, valine 57, and cysteine 82 each coordinate NAD(+). Residue serine 143 participates in substrate binding. 4 residues coordinate NAD(+): tyrosine 156, lysine 160, phenylalanine 189, and threonine 191. Catalysis depends on tyrosine 156, which acts as the Proton acceptor.

It belongs to the short-chain dehydrogenases/reductases (SDR) family.

This is an uncharacterized protein from Mycobacterium tuberculosis (strain CDC 1551 / Oshkosh).